Consider the following 292-residue polypeptide: 11-beta-hydroxysteroid dehydrogenase 1 (292 aa).

Residues 7 to 24 traverse the membrane as a helical segment; sequence YLLPILGIFLAYYYYSAN.

This sequence belongs to the short-chain dehydrogenases/reductases (SDR) family. Homodimer. In terms of tissue distribution, expressed highest in liver and ovaries (corpora lutea, granulosa cells, thecal, uterine caruncle and intercarunculer tissues), lower expression in kidney and spleen, and lowest in the adrenal.

It is found in the endoplasmic reticulum membrane. It carries out the reaction an 11beta-hydroxysteroid + NADP(+) = an 11-oxosteroid + NADPH + H(+). The catalysed reaction is corticosterone + NADP(+) = 11-dehydrocorticosterone + NADPH + H(+). The enzyme catalyses cortisone + NADPH + H(+) = cortisol + NADP(+). It catalyses the reaction a 7beta-hydroxysteroid + NADP(+) = a 7-oxosteroid + NADPH + H(+). It carries out the reaction 7-oxocholesterol + NADPH + H(+) = 7beta-hydroxycholesterol + NADP(+). The catalysed reaction is chenodeoxycholate + NADP(+) = 7-oxolithocholate + NADPH + H(+). The enzyme catalyses 7-oxolithocholate + NADPH + H(+) = ursodeoxycholate + NADP(+). It catalyses the reaction glycochenodeoxycholate + NADP(+) = 7-oxoglycolithocholate + NADPH + H(+). It carries out the reaction taurochenodeoxycholate + NADP(+) = 7-oxotaurolithocholate + NADPH + H(+). The catalysed reaction is tauroursodeoxycholate + NADP(+) = 7-oxotaurolithocholate + NADPH + H(+). The enzyme catalyses glycoursodeoxycholate + NADP(+) = 7-oxoglycolithocholate + NADPH + H(+). It catalyses the reaction 7-oxopregnenolone + NADPH + H(+) = 7beta-hydroxypregnenolone + NADP(+). It carries out the reaction 3beta,7alpha-dihydroxyandrost-5-en-17-one + NADP(+) = 3beta-hydroxy-5-androstene-7,17-dione + NADPH + H(+). The catalysed reaction is 3beta-hydroxy-5-androstene-7,17-dione + NADPH + H(+) = 3beta,7beta-dihydroxyandrost-5-en-17-one + NADP(+). The enzyme catalyses 3beta-hydroxy-5alpha-androstane-7,17-dione + NADPH + H(+) = 3beta,7beta-dihydroxy-5alpha-androstan-17-one + NADP(+). Controls the reversible conversion of biologically active glucocorticoids such as cortisone to cortisol, and 11-dehydrocorticosterone to corticosterone in the presence of NADP(H). Participates in the corticosteroid receptor-mediated anti-inflammatory response, as well as metabolic and homeostatic processes. Plays a role in the secretion of aqueous humor in the eye, maintaining a normotensive, intraocular environment. Bidirectional in vitro, predominantly functions as a reductase in vivo, thereby increasing the concentration of active glucocorticoids. It has broad substrate specificity, besides glucocorticoids, it accepts other steroid and sterol substrates. Interconverts 7-oxo- and 7-hydroxy-neurosteroids such as 7-oxopregnenolone and 7beta-hydroxypregnenolone, 7-oxodehydroepiandrosterone (3beta-hydroxy-5-androstene-7,17-dione) and 7beta-hydroxydehydroepiandrosterone (3beta,7beta-dihydroxyandrost-5-en-17-one), among others. Catalyzes the stereo-specific conversion of the major dietary oxysterol, 7-ketocholesterol (7-oxocholesterol), into the more polar 7-beta-hydroxycholesterol metabolite. 7-oxocholesterol is one of the most important oxysterols, it participates in several events such as induction of apoptosis, accumulation in atherosclerotic lesions, lipid peroxidation, and induction of foam cell formation. Mediates the 7-oxo reduction of 7-oxolithocholate mainly to chenodeoxycholate, and to a lesser extent to ursodeoxycholate, both in its free form and when conjugated to glycine or taurine, providing a link between glucocorticoid activation and bile acid metabolism. Catalyzes the synthesis of 7-beta-25-dihydroxycholesterol from 7-oxo-25-hydroxycholesterol in vitro, which acts as a ligand for the G-protein-coupled receptor (GPCR) Epstein-Barr virus-induced gene 2 (EBI2) and may thereby regulate immune cell migration. This Bos taurus (Bovine) protein is 11-beta-hydroxysteroid dehydrogenase 1.